The sequence spans 176 residues: Endoribonuclease YbeY (176 aa).

Residues H139, H143, and H149 each contribute to the Zn(2+) site.

The protein belongs to the endoribonuclease YbeY family. It depends on Zn(2+) as a cofactor.

The protein localises to the cytoplasm. In terms of biological role, single strand-specific metallo-endoribonuclease involved in late-stage 70S ribosome quality control and in maturation of the 3' terminus of the 16S rRNA. This is Endoribonuclease YbeY from Acaryochloris marina (strain MBIC 11017).